The chain runs to 508 residues: MAYERYEPVIGLEVHVQLQTNAKIFSPDAAAFGAAPNTQVDPISLGHPGTLPVLNETVVKHALRLGVATHCSIADRSAFARKHYFYPDLPKGYQISQYDTPICYDGYLEVFPGEEEDASPSAPDSRRVGLTRIHMEEDAGKSVHASAGGTTRLDNNRCGVPLLEMVTEPDLRSPREASLFLQRLRQLVRYLGISDGNMEEGSLRCDANVSVRPQGREAFGTRTELKNMNSMRHVEQALDYEIARQIAAEERGESITQQTLLWDADAGTTRPMRSKEEAHDYRYLPDPDLVEVRIEDATVDEVRANLPELPRARRRRFVEEVGLPAYDAGVLTEERAVADYFEEALRHLYKRTKGGDTDAQAKAVSNFIMTEVMRVLNERDLSVSELGVGPERLAQLVFLRLQDKVSSNGAQEVFEAMLDAPDKSAGRIADERDLIQVTDRGAIAPVVEDVLNDNPDKVNTYLGGKDGLLGFFIGQVMQRFDGSPNPELVRSLLREKLDARRDTANVDE.

Belongs to the GatB/GatE family. GatB subfamily. Heterotrimer of A, B and C subunits.

It catalyses the reaction L-glutamyl-tRNA(Gln) + L-glutamine + ATP + H2O = L-glutaminyl-tRNA(Gln) + L-glutamate + ADP + phosphate + H(+). The catalysed reaction is L-aspartyl-tRNA(Asn) + L-glutamine + ATP + H2O = L-asparaginyl-tRNA(Asn) + L-glutamate + ADP + phosphate + 2 H(+). Its function is as follows. Allows the formation of correctly charged Asn-tRNA(Asn) or Gln-tRNA(Gln) through the transamidation of misacylated Asp-tRNA(Asn) or Glu-tRNA(Gln) in organisms which lack either or both of asparaginyl-tRNA or glutaminyl-tRNA synthetases. The reaction takes place in the presence of glutamine and ATP through an activated phospho-Asp-tRNA(Asn) or phospho-Glu-tRNA(Gln). The sequence is that of Aspartyl/glutamyl-tRNA(Asn/Gln) amidotransferase subunit B from Salinibacter ruber (strain DSM 13855 / M31).